The primary structure comprises 527 residues: Bacillolysin (527 aa).

The first 28 residues, M1–A28, serve as a signal peptide directing secretion. Positions K29–H223 are cleaved as a propeptide — activation peptide. 3 residues coordinate Ca(2+): D276, D278, and D354. Zn(2+) is bound at residue H358. Residue E359 is part of the active site. Zn(2+) contacts are provided by H362 and E382. Residues D393, N394, D396, E401, Y404, T405, and D411 each coordinate Ca(2+). H442 acts as the Proton donor in catalysis.

The protein belongs to the peptidase M4 family. Requires Ca(2+) as cofactor. Zn(2+) serves as cofactor.

Its subcellular location is the secreted. The enzyme catalyses Similar, but not identical, to that of thermolysin.. Functionally, extracellular zinc metalloprotease. This is Bacillolysin (npr) from Brevibacillus brevis (Bacillus brevis).